Reading from the N-terminus, the 101-residue chain is NAD(P)H-quinone oxidoreductase subunit 4L, chloroplastic (101 aa).

3 helical membrane passes run 2-22 (MLEH…YGLI), 32-52 (MCLE…SDFF), and 61-81 (IFSI…PAIV).

The protein belongs to the complex I subunit 4L family. As to quaternary structure, NDH is composed of at least 16 different subunits, 5 of which are encoded in the nucleus.

It localises to the plastid. The protein localises to the chloroplast thylakoid membrane. The enzyme catalyses a plastoquinone + NADH + (n+1) H(+)(in) = a plastoquinol + NAD(+) + n H(+)(out). It catalyses the reaction a plastoquinone + NADPH + (n+1) H(+)(in) = a plastoquinol + NADP(+) + n H(+)(out). NDH shuttles electrons from NAD(P)H:plastoquinone, via FMN and iron-sulfur (Fe-S) centers, to quinones in the photosynthetic chain and possibly in a chloroplast respiratory chain. The immediate electron acceptor for the enzyme in this species is believed to be plastoquinone. Couples the redox reaction to proton translocation, and thus conserves the redox energy in a proton gradient. This Morus indica (Mulberry) protein is NAD(P)H-quinone oxidoreductase subunit 4L, chloroplastic.